Consider the following 227-residue polypeptide: Heptaprenylglyceryl phosphate synthase (227 aa).

Residue Lys13 coordinates sn-glycerol 1-phosphate. 2 residues coordinate Mg(2+): Asp15 and Thr41. Residues 159-164 (YLEYSG), Gly189, and 209-210 (GN) contribute to the sn-glycerol 1-phosphate site.

The protein belongs to the GGGP/HepGP synthase family. Group I subfamily. As to quaternary structure, homodimer. Requires Mg(2+) as cofactor.

It catalyses the reaction sn-glycerol 1-phosphate + all-trans-heptaprenyl diphosphate = 3-heptaprenyl-sn-glycero-1-phosphate + diphosphate. It participates in membrane lipid metabolism; glycerophospholipid metabolism. Functionally, prenyltransferase that catalyzes in vivo the transfer of the heptaprenyl moiety of heptaprenyl pyrophosphate (HepPP; 35 carbon atoms) to the C3 hydroxyl of sn-glycerol-1-phosphate (G1P), producing heptaprenylglyceryl phosphate (HepGP). This reaction is an ether-bond-formation step in the biosynthesis of archaea-type G1P-based membrane lipids found in Bacillales. The sequence is that of Heptaprenylglyceryl phosphate synthase from Exiguobacterium sibiricum (strain DSM 17290 / CCUG 55495 / CIP 109462 / JCM 13490 / 255-15).